Reading from the N-terminus, the 977-residue chain is Macrophage colony-stimulating factor 1 receptor (977 aa).

The first 18 residues, 1-18 (MFFALLFLIGILLGQVQG), serve as a signal peptide directing secretion. At 19–519 (WSEPRIRLSS…MEVSDQIFTS (501 aa)) the chain is on the extracellular side. Ig-like C2-type domains are found at residues 22 to 109 (PRIR…VHVF), 120 to 198 (PSTS…EKVS), 213 to 305 (PYVY…TQLL), 316 to 407 (PKLS…ASIT), and 408 to 513 (FDIK…MEVS). C48 and C92 form a disulfide bridge. N-linked (GlcNAc...) asparagine glycosylation is found at N98, N101, N154, N163, N244, N286, N298, N361, N424, and N455. Cystine bridges form between C138–C187 and C234–C289. An intrachain disulfide couples C430 to C495. A helical transmembrane segment spans residues 520-540 (AMCGSTVAMVVLGLLLIFMIY). Residues 541-977 (KYKQKPRYEI…LMKPNNYQFC (437 aa)) are Cytoplasmic-facing. The regulatory juxtamembrane domain stretch occupies residues 544-576 (QKPRYEIRWKIIEATNGNNYTFIDPTQLPYNEK). Y563 is modified (phosphotyrosine; by autocatalysis). The Protein kinase domain maps to 584–917 (LKLGKTLGAG…KISQMIQRML (334 aa)). Residues 590 to 598 (LGAGAFGKV) and K618 each bind ATP. Y701 and Y725 each carry phosphotyrosine; by autocatalysis. D781 acts as the Proton acceptor in catalysis. Positions 799-821 (DFGLARDIMNDSNYVVKGNARLP) are activation loop. 2 positions are modified to phosphotyrosine; by autocatalysis: Y812 and Y929. The interval 919 to 977 (ETSEQQDTQEYKNIPTEAEAEQQLESCDPVKHEDESFETSCDQEEEDQPLMKPNNYQFC) is disordered. The segment covering 953–966 (ESFETSCDQEEEDQ) has biased composition (acidic residues). Y974 carries the phosphotyrosine; by autocatalysis modification.

Belongs to the protein kinase superfamily. Tyr protein kinase family. CSF-1/PDGF receptor subfamily. Monomer. Homodimer. Interacts with CSF1. Autophosphorylated in response to CSF1 binding. autophosphorylation, leading to its degradation. In terms of processing, ubiquitinated. Becomes rapidly polyubiquitinated after autophosphorylation, leading to its degradation.

The protein resides in the cell membrane. The enzyme catalyses L-tyrosyl-[protein] + ATP = O-phospho-L-tyrosyl-[protein] + ADP + H(+). Its activity is regulated as follows. Present in an inactive conformation in the absence of bound ligand. CSF1 binding leads to dimerization and activation by autophosphorylation on tyrosine residues. Tyrosine-protein kinase that acts as a cell-surface receptor for CSF1 and plays an essential role in the regulation of survival, proliferation and differentiation of hematopoietic precursor cells, especially mononuclear phagocytes, such as macrophages and monocytes. Plays an important role in innate immunity and in inflammatory processes. Plays an important role in the regulation of osteoclast proliferation and differentiation, the regulation of bone resorption, and is required for normal bone development. Promotes reorganization of the actin cytoskeleton, regulates formation of membrane ruffles, cell adhesion and cell migration. Activates several signaling pathways in response to ligand binding. The polypeptide is Macrophage colony-stimulating factor 1 receptor (csf1r) (Danio rerio (Zebrafish)).